Here is a 247-residue protein sequence, read N- to C-terminus: MKMANPKYKRILIKLSGEALAGERGVGIDIQTVQTIAKEIQEVHSLGIEIALVIGGGNLWRGEPAAEAGMDRVQADYTGMLGTVMNALVMADSLQQVGVDTRVQTAIAMQQVAEPYVRGRALRHLEKGRIVIFGAGIGSPYFSTDTTAALRAAEIEADAILMAKNGVDGVYNADPKKDKTAVKFEELTHRDVINKGLRIMDSTASTLSMDNDIDLVVFNMNQSGNIKRVVFGENIGTTVSNNIEEKE.

Residue 14–17 coordinates ATP; sequence KLSG. The tract at residues 22–27 is involved in allosteric activation by GTP; sequence GERGVG. G56 lines the UMP pocket. G57 and R61 together coordinate ATP. Residues D76 and 137-144 each bind UMP; that span reads IGSPYFST. Positions 165, 171, and 174 each coordinate ATP.

It belongs to the UMP kinase family. In terms of assembly, homohexamer.

Its subcellular location is the cytoplasm. It carries out the reaction UMP + ATP = UDP + ADP. The protein operates within pyrimidine metabolism; CTP biosynthesis via de novo pathway; UDP from UMP (UMPK route): step 1/1. With respect to regulation, allosterically activated by GTP. Inhibited by UTP. Functionally, catalyzes the reversible phosphorylation of UMP to UDP. The polypeptide is Uridylate kinase (Streptococcus pneumoniae (strain ATCC BAA-255 / R6)).